Here is a 1110-residue protein sequence, read N- to C-terminus: Retinal guanylyl cyclase 1 (1110 aa).

The signal sequence occupies residues 1–56; the sequence is MTACTFLAGGLRDPGLCGPTRWAPSPPGLPPIPPRPRLRLRPPLLLLLLLPRSVLS. At 57–467 the chain is on the extracellular side; the sequence is AVFTVGVLGP…PDTICNGGVE (411 aa). Asparagine 302 carries N-linked (GlcNAc...) asparagine glycosylation. Residues 468–492 form a helical membrane-spanning segment; it reads PSVVFIGFLLVVGMGLAGAFLAHYC. The region spanning 493–813 is the Protein kinase domain; the sequence is RHRLLHIQMV…DRTFELFKSI (321 aa). The Cytoplasmic segment spans residues 493–1110; sequence RHRLLHIQMV…KARPGQFSGK (618 aa). One can recognise a Guanylate cyclase domain in the interval 885–1015; that stretch reads TLYFSDIVGF…DTVNTASAME (131 aa). The disordered stretch occupies residues 1070–1110; the sequence is PIPKPPDLQPGASNHGISLHEIPPDRRQKLEKARPGQFSGK. Residues 1091–1103 show a composition bias toward basic and acidic residues; it reads IPPDRRQKLEKAR.

It belongs to the adenylyl cyclase class-4/guanylyl cyclase family. In terms of assembly, homodimer; requires homodimerization for guanylyl cyclase activity. Interacts (via C-terminus) with RD3 (via C-terminus); promotes the exit of GUCY2D from the endoplasmic reticulum and its trafficking to the photoreceptor outer segments. Interaction with RD3 negatively regulates GUCY2D guanylate cyclase activity. As to expression, expressed in the retina in rod outer segment.

Its subcellular location is the photoreceptor outer segment membrane. It localises to the endoplasmic reticulum membrane. It catalyses the reaction GTP = 3',5'-cyclic GMP + diphosphate. With respect to regulation, activated by GUCA1A when free calcium ions concentration is low, and inhibited by GUCA1A when free calcium ions concentration is high. Negatively regulated by RD3; inhibits the basal and GUCA1A-stimulated guanylate cyclase activity. Functionally, catalyzes the synthesis of cyclic GMP (cGMP) in rods and cones of photoreceptors. Plays an essential role in phototransduction, by mediating cGMP replenishment. May also participate in the trafficking of membrane-asociated proteins to the photoreceptor outer segment membrane. This is Retinal guanylyl cyclase 1 (GUCY2D) from Bos taurus (Bovine).